Consider the following 143-residue polypeptide: Transcriptional regulator MraZ (143 aa).

SpoVT-AbrB domains follow at residues 5 to 47 (TYTP…PKEE) and 76 to 119 (ADEQ…DAQA).

Belongs to the MraZ family. In terms of assembly, forms oligomers.

The protein localises to the cytoplasm. It localises to the nucleoid. This Corynebacterium efficiens (strain DSM 44549 / YS-314 / AJ 12310 / JCM 11189 / NBRC 100395) protein is Transcriptional regulator MraZ.